The sequence spans 296 residues: Small ribosomal subunit protein uS2 (296 aa).

A disordered region spans residues 252–296; sequence TSSKTVSKLKQSKKLSKTQNIDEETNTEFDQALGGACENNNSDNT.

It belongs to the universal ribosomal protein uS2 family.

This Rickettsia prowazekii (strain Madrid E) protein is Small ribosomal subunit protein uS2 (rpsB).